A 161-amino-acid polypeptide reads, in one-letter code: UPF0262 protein SPOA0072 (161 aa).

A disordered region spans residues 1-21 (MTMSRISHIELDDSNLPPPTP).

It belongs to the UPF0262 family.

The chain is UPF0262 protein SPOA0072 from Ruegeria pomeroyi (strain ATCC 700808 / DSM 15171 / DSS-3) (Silicibacter pomeroyi).